The sequence spans 331 residues: Phosphate acyltransferase (331 aa).

Belongs to the PlsX family. In terms of assembly, homodimer. Probably interacts with PlsY.

Its subcellular location is the cytoplasm. It catalyses the reaction a fatty acyl-[ACP] + phosphate = an acyl phosphate + holo-[ACP]. It functions in the pathway lipid metabolism; phospholipid metabolism. In terms of biological role, catalyzes the reversible formation of acyl-phosphate (acyl-PO(4)) from acyl-[acyl-carrier-protein] (acyl-ACP). This enzyme utilizes acyl-ACP as fatty acyl donor, but not acyl-CoA. The protein is Phosphate acyltransferase of Mesoplasma florum (strain ATCC 33453 / NBRC 100688 / NCTC 11704 / L1) (Acholeplasma florum).